The following is a 416-amino-acid chain: Argininosuccinate synthase (416 aa).

ATP contacts are provided by residues 19–27 and A46; that span reads AYSGGLDTS. L-citrulline contacts are provided by Y97 and S102. Residue G127 participates in ATP binding. Residues T129, N133, and D134 each contribute to the L-aspartate site. N133 is an L-citrulline binding site. 5 residues coordinate L-citrulline: R137, S188, S197, E273, and Y285.

The protein belongs to the argininosuccinate synthase family. Type 1 subfamily. As to quaternary structure, homotetramer.

It localises to the cytoplasm. It carries out the reaction L-citrulline + L-aspartate + ATP = 2-(N(omega)-L-arginino)succinate + AMP + diphosphate + H(+). It participates in amino-acid biosynthesis; L-arginine biosynthesis; L-arginine from L-ornithine and carbamoyl phosphate: step 2/3. This chain is Argininosuccinate synthase, found in Granulibacter bethesdensis (strain ATCC BAA-1260 / CGDNIH1).